Consider the following 168-residue polypeptide: Photosystem I assembly protein Ycf3 (168 aa).

TPR repeat units follow at residues 35-68, 72-105, and 120-153; these read AFTY…EIDP, SYIL…NPFL, and GEEA…TPGN.

The protein belongs to the Ycf3 family.

The protein resides in the plastid. The protein localises to the chloroplast thylakoid membrane. In terms of biological role, essential for the assembly of the photosystem I (PSI) complex. May act as a chaperone-like factor to guide the assembly of the PSI subunits. The polypeptide is Photosystem I assembly protein Ycf3 (Nuphar advena (Common spatterdock)).